The sequence spans 146 residues: Large ribosomal subunit protein uL15 (146 aa).

The segment at 1-45 (MTIKLHHLRPAPGSKTERTRVGRGEGSKGKTAGRGTKGTKARKNV) is disordered. Residues 15–28 (KTERTRVGRGEGSK) show a composition bias toward basic and acidic residues.

This sequence belongs to the universal ribosomal protein uL15 family. In terms of assembly, part of the 50S ribosomal subunit.

In terms of biological role, binds to the 23S rRNA. This chain is Large ribosomal subunit protein uL15, found in Mycobacteroides abscessus (strain ATCC 19977 / DSM 44196 / CCUG 20993 / CIP 104536 / JCM 13569 / NCTC 13031 / TMC 1543 / L948) (Mycobacterium abscessus).